A 262-amino-acid chain; its full sequence is MSRLQLRFLLRRALSGSGCPRYSMPGSGCPGCFLPRVTCFRDFNIITSTMQYNLDKRNIYTSVGKHYFFDTHAVVQLLEANGFSAEQSEIVVSALVKILNVNMNLIHKDMVTKEQQEISLQQVMSLIASVKKDMIILEKSEFSALRTQNEKVKIELQQLKKQLNDSIVKVRASNKLDFNLEKSRVKEMHADNERKLLELRTSIVELHSQQDRGLTQTKRKIDTEVSGVKTMQESHKLDTIKYLAGSVFTCLTIALGFYRLWI.

Positions 138–175 (EKSEFSALRTQNEKVKIELQQLKKQLNDSIVKVRASNK) form a coiled coil. A helical transmembrane segment spans residues 239–261 (TIKYLAGSVFTCLTIALGFYRLW).

The protein belongs to the CCDC90 family.

The protein resides in the mitochondrion inner membrane. Functionally, key regulator of mitochondrial calcium uniporter (mcu) required for calcium entry into mitochondrion. This chain is Mitochondrial calcium uniporter regulator 1, found in Xenopus tropicalis (Western clawed frog).